The primary structure comprises 70 residues: U-scoloptoxin(20)-Sm1a (70 aa).

The signal sequence occupies residues 1-24 (MKKRSQVFCIFIAMVLLILPLSMS).

The protein belongs to the scoloptoxin-20 family. In terms of processing, contains 3 disulfide bonds. Expressed by the venom gland.

It is found in the secreted. In Scolopendra morsitans (Tanzanian blue ringleg centipede), this protein is U-scoloptoxin(20)-Sm1a.